Reading from the N-terminus, the 99-residue chain is DNA-directed RNA polymerase subunit omega (99 aa).

The protein belongs to the RNA polymerase subunit omega family. As to quaternary structure, the RNAP catalytic core consists of 2 alpha, 1 beta, 1 beta' and 1 omega subunit. When a sigma factor is associated with the core the holoenzyme is formed, which can initiate transcription.

The catalysed reaction is RNA(n) + a ribonucleoside 5'-triphosphate = RNA(n+1) + diphosphate. Its function is as follows. Promotes RNA polymerase assembly. Latches the N- and C-terminal regions of the beta' subunit thereby facilitating its interaction with the beta and alpha subunits. The protein is DNA-directed RNA polymerase subunit omega of Deinococcus deserti (strain DSM 17065 / CIP 109153 / LMG 22923 / VCD115).